The sequence spans 447 residues: Voltage-gated purine nucleotide uniporter SLC17A9 (447 aa).

The disordered stretch occupies residues 1-26; it reads MPSQRSSLMQPIPEETRKTPSAAAED. Over residues 14–26 the composition is skewed to basic and acidic residues; that stretch reads EETRKTPSAAAED. 11 consecutive transmembrane segments (helical) span residues 36 to 58, 74 to 94, 103 to 123, 129 to 149, 169 to 189, 197 to 217, 252 to 272, 287 to 307, 327 to 347, 380 to 400, and 413 to 433; these read LWTG…MPVC, GIVL…GGHL, VILL…LLAH, LAFV…YFPA, TVGA…SVLL, VFYF…KYLL, VWAV…LLSW, WVFN…SGFI, VMGL…TSFL, GFLF…GVCL, and CVFH…LVFG.

It belongs to the major facilitator superfamily. Sodium/anion cotransporter family.

The protein resides in the cytoplasmic vesicle. Its subcellular location is the secretory vesicle. It is found in the chromaffin granule membrane. The protein localises to the secretory vesicle membrane. It localises to the lysosome membrane. It carries out the reaction ATP(in) = ATP(out). The catalysed reaction is ADP(in) = ADP(out). The enzyme catalyses GTP(in) = GTP(out). Activity is chloride-dependent. Voltage-gated ATP nucleotide uniporter that can also transport the purine nucleotides ADP and GTP. Uses the membrane potential as the driving force to control ATP accumulation in lysosomes and secretory vesicles. By controlling ATP storage in lysosomes, regulates ATP-dependent proteins of these organelles. Also indirectly regulates the exocytosis of ATP through its import into lysosomes in astrocytes and secretory vesicles such as adrenal chromaffin granules, mucin granules and synaptic vesicles. This chain is Voltage-gated purine nucleotide uniporter SLC17A9, found in Rattus norvegicus (Rat).